Reading from the N-terminus, the 1134-residue chain is Sterol regulatory element-binding protein 1 (1134 aa).

The interval 1-60 (MDELAFGEAALEQTLAEMCELDTAVLNDIEDMLQLINNQDSDFPGLFDAPYAGGETGDTG) is transcriptional activation (acidic). Residues 1 to 477 (MDELAFGEAA…HSRGMLDRSR (477 aa)) lie on the Cytoplasmic side of the membrane. The 9aaTAD signature appears at 27–35 (NDIEDMLQL). The interval 46 to 73 (LFDAPYAGGETGDTGPSSPGANSPESFS) is disordered. The span at 59–69 (TGPSSPGANSP) shows a compositional bias: polar residues. A phosphoserine mark is found at S96 and S115. Disordered stretches follow at residues 130-149 (LQPAAPQPSPGTLLPPSFPA) and 170-195 (SGTLPGNTQQPPSSLPLAPAPGVLPT). Polar residues predominate over residues 170–179 (SGTLPGNTQQ). The segment at 227–487 (QQVPVVLQPH…LALCVLAFLC (261 aa)) is interaction with LMNA. One can recognise a bHLH domain in the interval 317–367 (EKRTAHNAIEKRYRSSINDKIVELKDLVVGTEAKLNKSAVLRKAIDYIRFL). A phosphoserine; by SIK1 mark is found at S331 and S332. Residues 367 to 388 (LQHSNQKLKQENLTLRSAHKSK) form a leucine-zipper region. S389 bears the Phosphoserine; by AMPK mark. The residue at position 395 (S395) is a Phosphoserine; by SIK1. The interval 415–468 (VETLTPPPSDAGSPSQSSPLSFGSRASSSGGSDSEPDSPAFEDSQVKAQRLPSH) is disordered. A compositionally biased stretch (low complexity) spans 424 to 453 (DAGSPSQSSPLSFGSRASSSGGSDSEPDSP). S448 carries the phosphoserine modification. Residues 478 to 498 (LALCVLAFLCLTCNPLASLFG) form a helical membrane-spanning segment. At 499-536 (WGILTPSDATGTHRSSGRSMLEAESRDGSNWTQWLLPP) the chain is on the lumenal side. A helical transmembrane segment spans residues 537–557 (LVWLANGLLVLACLALLFVYG). Residues 558–1134 (EPVTRPHSGP…LGGGTTVTSS (577 aa)) lie on the Cytoplasmic side of the membrane. S1047 bears the Phosphoserine mark.

It belongs to the SREBP family. As to quaternary structure, forms a tight complex with SCAP, the SCAP-SREBP complex, in the endoplasmic reticulum membrane and the Golgi apparatus. Interacts with PAQR3; the interaction anchors the SCAP-SREBP complex to the Golgi apparatus in low cholesterol conditions. In terms of assembly, efficient DNA binding of the soluble transcription factor fragment requires dimerization with another bHLH protein. Interacts with CEBPA, the interaction produces a transcriptional synergy. Interacts with LMNA. Processed in the Golgi apparatus, releasing the protein from the membrane. At low cholesterol the SCAP-SREBP complex is recruited into COPII vesicles for export from the endoplasmic reticulum. In the Golgi, complex SREBPs are cleaved sequentially by site-1 (MBTPS1, S1P) and site-2 (MBTPS2, S2P) proteases. The first cleavage by site-1 protease occurs within the luminal loop, the second cleavage by site-2 protease occurs within the first transmembrane domain, releasing the transcription factor from the Golgi membrane. Post-translationally, phosphorylated by AMPK, leading to suppress protein processing and nuclear translocation, and repress target gene expression. Phosphorylation at Ser-389 by SIK1 represses activity possibly by inhibiting DNA-binding. In terms of processing, SCAP-free SREBF1 is ubiquitinated by the BCR(ARMC5) complex, leading to its degradation. Ubiquitinated; the nuclear form has a rapid turnover and is rapidly ubiquitinated and degraded by the proteasome in the nucleus. In terms of tissue distribution, predominant isoform expressed in most tissues. Predominates in liver, adrenal gland, brain and adipose tissue. Also found in kidney, thymus, testis, muscle, jejunum, and ileum. Expressed only in select tissues, such as intestinal epithelial, heart, macrophage and bone marrow dendritic cells. Also found in kidney, thymus, testis, muscle, jejunum, and ileum.

The protein localises to the endoplasmic reticulum membrane. Its subcellular location is the golgi apparatus membrane. It localises to the cytoplasmic vesicle. It is found in the COPII-coated vesicle membrane. The protein resides in the nucleus. Activation by cleavage is down-regulated upon activation of SIRT3-dependent PRKAA1/AMPK-alpha signaling cascade which leads to inhibition of ATP-consuming lipogenesis to restore cellular energy balance. In terms of biological role, precursor of the transcription factor form (Processed sterol regulatory element-binding protein 1), which is embedded in the endoplasmic reticulum membrane. Low sterol concentrations promote processing of this form, releasing the transcription factor form that translocates into the nucleus and activates transcription of genes involved in cholesterol biosynthesis and lipid homeostasis. Key transcription factor that regulates expression of genes involved in cholesterol biosynthesis and lipid homeostasis. Binds to the sterol regulatory element 1 (SRE-1) (5'-ATCACCCCAC-3'). Has dual sequence specificity binding to both an E-box motif (5'-ATCACGTGA-3') and to SRE-1 (5'-ATCACCCCAC-3'). Regulates the promoters of genes involved in cholesterol biosynthesis and the LDL receptor (LDLR) pathway of sterol regulation. Its function is as follows. Isoform expressed only in select tissues, which has higher transcriptional activity compared to SREBP-1C. Able to stimulate both lipogenic and cholesterogenic gene expression. Has a role in the nutritional regulation of fatty acids and triglycerides in lipogenic organs such as the liver. Required for innate immune response in macrophages by regulating lipid metabolism. Functionally, predominant isoform expressed in most tissues, which has weaker transcriptional activity compared to isoform SREBP-1A. Primarily controls expression of lipogenic gene. Strongly activates global lipid synthesis in rapidly growing cells. This chain is Sterol regulatory element-binding protein 1, found in Mus musculus (Mouse).